Consider the following 526-residue polypeptide: Tyrosine-protein kinase transforming protein Src (526 aa).

Residues 1-57 form a disordered region; the sequence is MGSSKSKPKDPSQRRRSLEPPDSTHHGGFPASQTPNKTAAPDTHRTPSRSFGTVATE. A lipid anchor (N-myristoyl glycine; by host) is attached at glycine 2. The span at 7 to 25 shows a compositional bias: basic and acidic residues; it reads KPKDPSQRRRSLEPPDSTH. An SH3 domain is found at 81-142; the sequence is GGVTTFVALY…PSNYVAPSDS (62 aa). The SH2 domain occupies 148 to 245; sequence WYFGKITRRE…GLCHRLTNVC (98 aa). The Protein kinase domain maps to 267-517; the sequence is LRLEVKLGQG…TFEYLQAQLL (251 aa). ATP-binding positions include 273 to 281 and lysine 295; that span reads LGQGCFGEV. Residue aspartate 386 is the Proton acceptor of the active site. Tyrosine 416 carries the post-translational modification Phosphotyrosine; by autocatalysis.

The protein belongs to the protein kinase superfamily. Tyr protein kinase family. SRC subfamily. Homodimer. The phosphorylated form is termed pp60v-src.

It carries out the reaction L-tyrosyl-[protein] + ATP = O-phospho-L-tyrosyl-[protein] + ADP + H(+). Functionally, this phosphoprotein, required for both the initiation and the maintenance of neoplastic transformation, is a protein kinase that catalyzes the phosphorylation of tyrosine residues in vitro. Causes mitotic slippage in addition to cytokinesis failure in the host cell. Phosphorylates and attenuates the activity of host CDK1, possibly causing the mitotic slippage. In Rous sarcoma virus subgroup A (strain Schmidt-Ruppin) (RSV-SR-A), this protein is Tyrosine-protein kinase transforming protein Src (V-SRC).